A 199-amino-acid chain; its full sequence is Nucleoid occlusion factor SlmA (199 aa).

The HTH tetR-type domain occupies 11–71 (ERRQQVLTVL…ALIDNLEAHL (61 aa)). The segment at residues 34–53 (TTARIAAEVGVSEAALYRYY) is a DNA-binding region (H-T-H motif).

This sequence belongs to the nucleoid occlusion factor SlmA family. As to quaternary structure, homodimer. Interacts with FtsZ.

Its subcellular location is the cytoplasm. It is found in the nucleoid. Functionally, required for nucleoid occlusion (NO) phenomenon, which prevents Z-ring formation and cell division over the nucleoid. Acts as a DNA-associated cell division inhibitor that binds simultaneously chromosomal DNA and FtsZ, and disrupts the assembly of FtsZ polymers. SlmA-DNA-binding sequences (SBS) are dispersed on non-Ter regions of the chromosome, preventing FtsZ polymerization at these regions. This is Nucleoid occlusion factor SlmA from Pasteurella multocida (strain Pm70).